Consider the following 202-residue polypeptide: Large ribosomal subunit protein bL17 (202 aa).

Residues 130-142 are compositionally biased toward low complexity; that stretch reads AAPAATAPAPVEE. The disordered stretch occupies residues 130–202; the sequence is AAPAATAPAP…TEESTEDDKA (73 aa). Composition is skewed to acidic residues over residues 143-168 and 177-202; these read APAE…EASP and QPVE…DDKA.

Belongs to the bacterial ribosomal protein bL17 family. Part of the 50S ribosomal subunit. Contacts protein L32.

This Nocardioides sp. (strain ATCC BAA-499 / JS614) protein is Large ribosomal subunit protein bL17.